The primary structure comprises 1923 residues: Endoribonuclease Dicer (1923 aa).

Residues 51-227 (LLEAALDHNT…ELEEKIQKLE (177 aa)) form the Helicase ATP-binding domain. 64 to 71 (LNTGSGKT) provides a ligand contact to ATP. The DECH box motif lies at 175–178 (DECH). The segment at 256–595 (DCGPFTDRSG…LRNKCSKSVD (340 aa)) is required for interaction with PRKRA and TARBP2. Residues 410-433 (VSWSDSEDDEEDEEIEEKEKPETN) are disordered. A phosphoserine mark is found at serine 413 and serine 415. Positions 414–425 (DSEDDEEDEEIE) are enriched in acidic residues. Positions 433–602 (NFPSPFTNIL…SVDTGEADTE (170 aa)) constitute a Helicase C-terminal domain. Residues 629 to 721 (AIGHVNRYCA…MPVGKETVKY (93 aa)) form the Dicer dsRNA-binding fold domain. One can recognise a PAZ domain in the interval 894–1041 (KFMEDIEKSE…LVPELCAIHP (148 aa)). Phosphoserine occurs at positions 1015 and 1160. Polar residues-rich tracts occupy residues 1246–1255 (NANTSTSDGS) and 1277–1290 (SEQSPSPGYSSRTL). The segment at 1246–1291 (NANTSTSDGSPVTAAVPGTTETGEAPPDRTASEQSPSPGYSSRTLG) is disordered. Residues 1276-1404 (ASEQSPSPGY…TEKWEKDEMT (129 aa)) form the RNase III 1 domain. Mg(2+) contacts are provided by glutamate 1316, glutamate 1396, and glutamate 1399. Phosphoserine is present on residues serine 1461, serine 1469, and serine 1471. The region spanning 1667 to 1825 (FENFEKKINY…LAGAIYMDSG (159 aa)) is the RNase III 2 domain. Residues glutamate 1706, aspartate 1811, and glutamate 1814 each contribute to the Mg(2+) site. The region spanning 1853 to 1915 (SPVRELLEME…ARRALRSLKA (63 aa)) is the DRBM domain. Serine 1869 is subject to Phosphoserine.

Belongs to the helicase family. Dicer subfamily. As to quaternary structure, component of the RISC loading complex (RLC), or micro-RNA (miRNA) loading complex (miRLC), which is composed of DICER1, AGO2 and TARBP2; DICER1 and TARBP2 are required to process precursor miRNAs (pre-miRNAs) to mature miRNAs and then load them onto AGO2. Note that the trimeric RLC/miRLC is also referred to as RISC. Interacts with DHX9, AGO1, PIWIL1 and PRKRA. Interacts with AGO2, TARBP2, EIF6, MOV10 and RPL7A (60S ribosome subunit); they form a large RNA-induced silencing complex (RISC). Interacts with BCDIN3D. Interacts (via Dicer dsRNA-binding fold domain) with ALOX5 (via PLAT domain); this interaction enhances arachidonate 5-lipoxygenase activity and modifies the miRNA precursor processing activity of DICER1. Mg(2+) serves as cofactor. Requires Mn(2+) as cofactor.

The protein localises to the cytoplasm. It catalyses the reaction Endonucleolytic cleavage to 5'-phosphomonoester.. In terms of biological role, double-stranded RNA (dsRNA) endoribonuclease playing a central role in short dsRNA-mediated post-transcriptional gene silencing. Cleaves naturally occurring long dsRNAs and short hairpin pre-microRNAs (miRNA) into fragments of twenty-one to twenty-three nucleotides with 3' overhang of two nucleotides, producing respectively short interfering RNAs (siRNA) and mature microRNAs. SiRNAs and miRNAs serve as guide to direct the RNA-induced silencing complex (RISC) to complementary RNAs to degrade them or prevent their translation. Gene silencing mediated by siRNAs, also called RNA interference, controls the elimination of transcripts from mobile and repetitive DNA elements of the genome but also the degradation of exogenous RNA of viral origin for instance. The miRNA pathway on the other side is a mean to specifically regulate the expression of target genes. In Bos taurus (Bovine), this protein is Endoribonuclease Dicer (DICER1).